Consider the following 191-residue polypeptide: Calcium-activated potassium channel subunit beta-1 (191 aa).

Residues 1–15 (MGKKLVMAQKRGETR) are Cytoplasmic-facing. Residues 16–36 (ALCLGVAMVMCAVIAYYILGT) form a helical membrane-spanning segment. Residues 37–157 (TMLPLYQKSV…YRRLYGPQTL (121 aa)) lie on the Extracellular side of the membrane. N-linked (GlcNAc...) asparagine glycosylation is found at Asn80 and Asn142. A helical membrane pass occupies residues 158–178 (LFSLFWPTFLLTGGLLIIAMV). Residues 179–191 (KINQSLSILAAQR) are Cytoplasmic-facing.

The protein belongs to the KCNMB (TC 8.A.14.1) family. KCNMB1 subfamily. In terms of assembly, interacts with KCNMA1 tetramer. There are probably 4 molecules of KCMNB1 per KCNMA1 tetramer. N-glycosylated.

The protein resides in the membrane. Its function is as follows. Regulatory subunit of the calcium activated potassium KCNMA1 (maxiK) channel. Modulates the calcium sensitivity and gating kinetics of KCNMA1, thereby contributing to KCNMA1 channel diversity. Increases the apparent Ca(2+)/voltage sensitivity of the KCNMA1 channel. It also modifies KCNMA1 channel kinetics and alters its pharmacological properties. It slows down the activation and the deactivation kinetics of the channel. Acts as a negative regulator of smooth muscle contraction by enhancing the calcium sensitivity to KCNMA1. Its presence is also a requirement for internal binding of the KCNMA1 channel opener dehydrosoyasaponin I (DHS-1) triterpene glycoside and for external binding of the agonist hormone 17-beta-estradiol (E2). Increases the binding activity of charybdotoxin (CTX) toxin to KCNMA1 peptide blocker by increasing the CTX association rate and decreasing the dissociation rate. This chain is Calcium-activated potassium channel subunit beta-1 (KCNMB1), found in Canis lupus familiaris (Dog).